A 379-amino-acid chain; its full sequence is Methionine aminopeptidase 1 (379 aa).

Residues 7–60 (KHICCGIDCNNEADRLQCPKCLNDGVKSYFCGQECFRNSWNIHKHLHRPPNVEK) form a C6H2-type zinc finger. Residues C10, C15, C24, C27, C37, C41, H49, and H53 each contribute to the Zn(2+) site. An a protein-binding site is contributed by H192. 3 residues coordinate Zn(2+): D209, D220, and H289. H296 lines the a protein pocket. E322 and E353 together coordinate Zn(2+). Position 373 is a phosphoserine (S373).

It belongs to the peptidase M24A family. Methionine aminopeptidase type 1 subfamily. Associates with the 60S ribosomal subunit of the 80S translational complex. Requires Zn(2+) as cofactor. Co(2+) serves as cofactor. The cofactor is Mn(2+). Fe(2+) is required as a cofactor.

The protein localises to the cytoplasm. The protein resides in the nucleus. It localises to the nucleolus. It catalyses the reaction Release of N-terminal amino acids, preferentially methionine, from peptides and arylamides.. Cotranslationally removes the N-terminal methionine from nascent proteins. The N-terminal methionine is often cleaved when the second residue in the primary sequence is small and uncharged (Met-Ala-, Cys, Gly, Pro, Ser, Thr, or Val). This is Methionine aminopeptidase 1 (fma1) from Schizosaccharomyces pombe (strain 972 / ATCC 24843) (Fission yeast).